A 2314-amino-acid polypeptide reads, in one-letter code: A-kinase anchor protein 6 (2314 aa).

Residues 1–12 (MLTMSVTLSPLR) are compositionally biased toward polar residues. Disordered stretches follow at residues 1-25 (MLTM…DASP), 285-432 (PSSC…DPPD), 505-613 (SLCR…PCHA), and 736-755 (TDEK…HSAT). The span at 301–311 (SDDHKGEHGED) shows a compositional bias: basic and acidic residues. Over residues 319–330 (QLDSTVGMSSLD) the composition is skewed to polar residues. The span at 398–420 (ETQKNERKGSDRKGQVVDLKPEL) shows a compositional bias: basic and acidic residues. Low complexity predominate over residues 569–592 (SKASSSPPCSHSSESSLGSDSIKS). Positions 736–753 (TDEKSERPSSSEKNESHS) are enriched in basic and acidic residues. 2 Spectrin repeats span residues 768–847 (QHQE…QLLE) and 1033–1148 (ILEK…LLDD). A Phosphoserine modification is found at serine 1072. The tract at residues 1349 to 1401 (CHSGDLSQNSGSESGIVSEGDNEMPTNSDMSLFSMVDGSPSNPETEHPDPQMG) is disordered. Polar residues predominate over residues 1353–1363 (DLSQNSGSESG). A phosphoserine mark is found at serine 1568 and serine 1593. Composition is skewed to basic and acidic residues over residues 1816–1831 (RSGV…DGGG) and 1874–1891 (GENK…HVAD). Disordered stretches follow at residues 1816-1838 (RSGV…ANPS), 1854-1926 (LSEN…KTIS), and 1940-2012 (SEDS…SGAR). Residues 1917–1926 (NLASNVKTIS) are compositionally biased toward polar residues. Basic and acidic residues predominate over residues 1944-1958 (SVARKEFCPPNDRHP). Residues 2062–2075 (IIDMASTALKSKSQ) form a PKA-RII subunit binding domain region. Residues 2166–2286 (EEAGLPGALP…NAKQPKGKVA (121 aa)) are disordered. A compositionally biased stretch (basic and acidic residues) spans 2215-2226 (GADDAKEGDDVS). Residues 2227–2243 (HTSQGCAESTEPTTPSG) are compositionally biased toward polar residues.

As to quaternary structure, interacts with RII subunit of PKA, phosphatase 2B (calcineurin) and AKAP79. Interacts with SYNPO2.

The protein localises to the sarcoplasmic reticulum. Its subcellular location is the nucleus membrane. Its function is as follows. Binds to type II regulatory subunits of protein kinase A and anchors/targets them to the nuclear membrane or sarcoplasmic reticulum. May act as an adapter for assembling multiprotein complexes. The protein is A-kinase anchor protein 6 (Akap6) of Rattus norvegicus (Rat).